The following is a 316-amino-acid chain: Olfactory receptor 10H28 (316 aa).

At 1 to 26 the chain is on the extracellular side; that stretch reads MPGQNYSTISEFILFGFSAFPHQMLP. An N-linked (GlcNAc...) asparagine glycan is attached at N5. The chain crosses the membrane as a helical span at residues 27–47; sequence ALFLLYLLMYLFTLLGNLVIM. The Cytoplasmic segment spans residues 48 to 57; the sequence is AAIWTEHRLH. A helical transmembrane segment spans residues 58 to 78; it reads TPMYLFLCALSISEILFTVVI. The Extracellular segment spans residues 79-100; it reads TPRMLSDMLSTHRSITFIACAN. C98 and C190 are joined by a disulfide. A helical transmembrane segment spans residues 101-121; it reads QLFFSFTFGYTHSFLLVVMGY. Residues 122–144 are Cytoplasmic-facing; that stretch reads DRYVAICRPLHYHALMSLQGCAR. The chain crosses the membrane as a helical span at residues 145–165; it reads LVAWSWAGGSLIGMALTIIIF. Residues 166-207 are Extracellular-facing; it reads HLTFCESNVIHHILCHVFSLLKLACGERTAFVTIAVILVCVT. Residues 208 to 228 form a helical membrane-spanning segment; the sequence is PLIGCLVFIILSYIFIVAAIL. The Cytoplasmic segment spans residues 229–241; the sequence is RIPSTEGRHKTFS. Residues 242 to 262 traverse the membrane as a helical segment; it reads TCASHLTVVIVHYGFASIIYL. Residues 263-273 lie on the Extracellular side of the membrane; the sequence is KSRGLYSQYTD. A helical transmembrane segment spans residues 274-294; that stretch reads TLMSTTYTVFTPFLSPIIFSL. Residues 295 to 316 lie on the Cytoplasmic side of the membrane; that stretch reads RNKELKNAIIKSFHRNVCQQSI.

This sequence belongs to the G-protein coupled receptor 1 family.

Its subcellular location is the cell membrane. Its function is as follows. Odorant receptor. This chain is Olfactory receptor 10H28, found in Mus musculus (Mouse).